Consider the following 152-residue polypeptide: Small ribosomal subunit protein uS17A (152 aa).

This sequence belongs to the universal ribosomal protein uS17 family. As to quaternary structure, component of the small ribosomal subunit (SSU). Mature yeast ribosomes consist of a small (40S) and a large (60S) subunit. The 40S small subunit contains 1 molecule of ribosomal RNA (18S rRNA) and at least 33 different proteins. The large 60S subunit contains 3 rRNA molecules (25S, 5.8S and 5S rRNA) and at least 46 different proteins.

Its subcellular location is the cytoplasm. The protein localises to the nucleus. Component of the ribosome, a large ribonucleoprotein complex responsible for the synthesis of proteins in the cell. The small ribosomal subunit (SSU) binds messenger RNAs (mRNAs) and translates the encoded message by selecting cognate aminoacyl-transfer RNA (tRNA) molecules. The large subunit (LSU) contains the ribosomal catalytic site termed the peptidyl transferase center (PTC), which catalyzes the formation of peptide bonds, thereby polymerizing the amino acids delivered by tRNAs into a polypeptide chain. The nascent polypeptides leave the ribosome through a tunnel in the LSU and interact with protein factors that function in enzymatic processing, targeting, and the membrane insertion of nascent chains at the exit of the ribosomal tunnel. The polypeptide is Small ribosomal subunit protein uS17A (rps1101) (Schizosaccharomyces pombe (strain 972 / ATCC 24843) (Fission yeast)).